The primary structure comprises 666 residues: tRNA 5-methylaminomethyl-2-thiouridine biosynthesis bifunctional protein MnmC (666 aa).

A tRNA (mnm(5)s(2)U34)-methyltransferase region spans residues 1 to 245 (MKQYAIQPAN…KREMLCGVMA (245 aa)). The FAD-dependent cmnm(5)s(2)U34 oxidoreductase stretch occupies residues 270–666 (IGGGIASALL…RKLLKGKAVK (397 aa)).

It in the N-terminal section; belongs to the methyltransferase superfamily. tRNA (mnm(5)s(2)U34)-methyltransferase family. In the C-terminal section; belongs to the DAO family. Requires FAD as cofactor.

It is found in the cytoplasm. The enzyme catalyses 5-aminomethyl-2-thiouridine(34) in tRNA + S-adenosyl-L-methionine = 5-methylaminomethyl-2-thiouridine(34) in tRNA + S-adenosyl-L-homocysteine + H(+). In terms of biological role, catalyzes the last two steps in the biosynthesis of 5-methylaminomethyl-2-thiouridine (mnm(5)s(2)U) at the wobble position (U34) in tRNA. Catalyzes the FAD-dependent demodification of cmnm(5)s(2)U34 to nm(5)s(2)U34, followed by the transfer of a methyl group from S-adenosyl-L-methionine to nm(5)s(2)U34, to form mnm(5)s(2)U34. The chain is tRNA 5-methylaminomethyl-2-thiouridine biosynthesis bifunctional protein MnmC from Citrobacter koseri (strain ATCC BAA-895 / CDC 4225-83 / SGSC4696).